The sequence spans 200 residues: Small ribosomal subunit protein uS4 (200 aa).

The segment at 22 to 42 (TGKELEKRPYAPGPHGPGQRK) is disordered. An S4 RNA-binding domain is found at 92–155 (TRLDNLVYRL…QNLAVVKESV (64 aa)).

This sequence belongs to the universal ribosomal protein uS4 family. As to quaternary structure, part of the 30S ribosomal subunit. Contacts protein S5. The interaction surface between S4 and S5 is involved in control of translational fidelity.

In terms of biological role, one of the primary rRNA binding proteins, it binds directly to 16S rRNA where it nucleates assembly of the body of the 30S subunit. Functionally, with S5 and S12 plays an important role in translational accuracy. This is Small ribosomal subunit protein uS4 from Bacillus pumilus (strain SAFR-032).